A 265-amino-acid chain; its full sequence is tRNA (guanine-N(1)-)-methyltransferase (265 aa).

Residues glycine 119 and 139–144 (VGDYIL) each bind S-adenosyl-L-methionine.

It belongs to the RNA methyltransferase TrmD family. In terms of assembly, homodimer.

It is found in the cytoplasm. It carries out the reaction guanosine(37) in tRNA + S-adenosyl-L-methionine = N(1)-methylguanosine(37) in tRNA + S-adenosyl-L-homocysteine + H(+). In terms of biological role, specifically methylates guanosine-37 in various tRNAs. The sequence is that of tRNA (guanine-N(1)-)-methyltransferase from Pseudoalteromonas atlantica (strain T6c / ATCC BAA-1087).